The chain runs to 388 residues: Probable mannan endo-1,4-beta-mannosidase A-1 (388 aa).

An N-terminal signal peptide occupies residues 1–20 (MKLSPLMALAGLASAQLALA). Residues tryptophan 93 and asparagine 206 each coordinate substrate. Catalysis depends on glutamate 207, which acts as the Proton donor. Asparagine 264 carries N-linked (GlcNAc...) asparagine glycosylation. Tyrosine 282 contributes to the substrate binding site. Catalysis depends on glutamate 315, which acts as the Nucleophile. N-linked (GlcNAc...) asparagine glycosylation occurs at asparagine 335. Position 345 (tryptophan 345) interacts with substrate.

Belongs to the glycosyl hydrolase 5 (cellulase A) family.

It localises to the secreted. It carries out the reaction Random hydrolysis of (1-&gt;4)-beta-D-mannosidic linkages in mannans, galactomannans and glucomannans.. In terms of biological role, endo-1,4-mannanase, a crucial enzyme for depolymerization of seed galactomannans and wood galactoglucomannans. This is Probable mannan endo-1,4-beta-mannosidase A-1 (manA-1) from Aspergillus terreus (strain NIH 2624 / FGSC A1156).